Reading from the N-terminus, the 92-residue chain is Small ribosomal subunit protein uS19c (92 aa).

It belongs to the universal ribosomal protein uS19 family.

The protein resides in the plastid. Its subcellular location is the chloroplast. Protein S19 forms a complex with S13 that binds strongly to the 16S ribosomal RNA. The chain is Small ribosomal subunit protein uS19c from Pyropia yezoensis (Susabi-nori).